A 189-amino-acid polypeptide reads, in one-letter code: Shikimate kinase (189 aa).

11–16 lines the ATP pocket; that stretch reads GTGKSA. A Mg(2+)-binding site is contributed by serine 15. The substrate site is built by aspartate 33, arginine 57, and glycine 79. Arginine 117 contacts ATP. Substrate is bound at residue arginine 135.

The protein belongs to the shikimate kinase family. In terms of assembly, monomer. Mg(2+) serves as cofactor.

It localises to the cytoplasm. The enzyme catalyses shikimate + ATP = 3-phosphoshikimate + ADP + H(+). Its pathway is metabolic intermediate biosynthesis; chorismate biosynthesis; chorismate from D-erythrose 4-phosphate and phosphoenolpyruvate: step 5/7. Catalyzes the specific phosphorylation of the 3-hydroxyl group of shikimic acid using ATP as a cosubstrate. The sequence is that of Shikimate kinase from Desulforudis audaxviator (strain MP104C).